The chain runs to 91 residues: Cell division topological specificity factor (91 aa).

Belongs to the MinE family.

Prevents the cell division inhibition by proteins MinC and MinD at internal division sites while permitting inhibition at polar sites. This ensures cell division at the proper site by restricting the formation of a division septum at the midpoint of the long axis of the cell. The protein is Cell division topological specificity factor of Desulfitobacterium hafniense (strain DSM 10664 / DCB-2).